Consider the following 159-residue polypeptide: Large ribosomal subunit protein mL43 (159 aa).

The segment at Ser123 to Gln159 is disordered.

This sequence belongs to the mitochondrion-specific ribosomal protein mL43 family. In terms of assembly, component of the mitochondrial ribosome large subunit (39S) which comprises a 16S rRNA and about 50 distinct proteins.

It is found in the mitochondrion. The sequence is that of Large ribosomal subunit protein mL43 (MRPL43) from Bos taurus (Bovine).